Consider the following 352-residue polypeptide: UDP-N-acetylglucosamine--N-acetylmuramyl-(pentapeptide) pyrophosphoryl-undecaprenol N-acetylglucosamine transferase (352 aa).

Residues Ser-195 and Gln-287 each contribute to the UDP-N-acetyl-alpha-D-glucosamine site.

Belongs to the glycosyltransferase 28 family. MurG subfamily.

The protein localises to the cell membrane. It carries out the reaction Mur2Ac(oyl-L-Ala-gamma-D-Glu-L-Lys-D-Ala-D-Ala)-di-trans,octa-cis-undecaprenyl diphosphate + UDP-N-acetyl-alpha-D-glucosamine = beta-D-GlcNAc-(1-&gt;4)-Mur2Ac(oyl-L-Ala-gamma-D-Glu-L-Lys-D-Ala-D-Ala)-di-trans,octa-cis-undecaprenyl diphosphate + UDP + H(+). The protein operates within cell wall biogenesis; peptidoglycan biosynthesis. Functionally, cell wall formation. Catalyzes the transfer of a GlcNAc subunit on undecaprenyl-pyrophosphoryl-MurNAc-pentapeptide (lipid intermediate I) to form undecaprenyl-pyrophosphoryl-MurNAc-(pentapeptide)GlcNAc (lipid intermediate II). This is UDP-N-acetylglucosamine--N-acetylmuramyl-(pentapeptide) pyrophosphoryl-undecaprenol N-acetylglucosamine transferase from Streptococcus pneumoniae (strain JJA).